An 84-amino-acid chain; its full sequence is Small ribosomal subunit protein uS17 (84 aa).

This sequence belongs to the universal ribosomal protein uS17 family. In terms of assembly, part of the 30S ribosomal subunit.

Its function is as follows. One of the primary rRNA binding proteins, it binds specifically to the 5'-end of 16S ribosomal RNA. This Clostridium novyi (strain NT) protein is Small ribosomal subunit protein uS17.